Here is a 316-residue protein sequence, read N- to C-terminus: Conjugated bile acid hydrolase (316 aa).

The active-site Nucleophile is the Cys2. The deoxycholate site is built by Cys2 and Arg18. A taurine-binding site is contributed by Asn81.

The protein belongs to the peptidase C59 family.

It catalyses the reaction cholate + taurine = taurocholate + H2O. The enzyme catalyses taurochenodeoxycholate + H2O = chenodeoxycholate + taurine. It carries out the reaction taurodeoxycholate + H2O = deoxycholate + taurine. The catalysed reaction is glycocholate + H2O = cholate + glycine. It catalyses the reaction glycodeoxycholate + H2O = deoxycholate + glycine. Its pathway is lipid metabolism; bile acid biosynthesis. In terms of biological role, bile salt hydrolase that catalyzes the deconjugation of glycine- and taurine-linked bile salts, which occurs naturally in the intestines of humans, releasing amino acid residues and deconjugated bile salts (bile acids). Can hydrolyze the amide bond in the bile salts taurocholate (TCA), taurodeoxycholate (TDCA), taurochenodeoxycholate (TCDCA), glycocholate (GCA) and glycodeoxycholate (GDCA). Shows highest activity toward the taurine-conjugated bile salts TCA and TCDCA. The activity toward the other three substrates (TDCA, GCA and GDCA) is relatively low. This enzyme likely contributes to bile salt resistance of the strain and may be associated with survival capability of strain JCM1131 within the human intestine by bile detoxification. The protein is Conjugated bile acid hydrolase of Lactobacillus gasseri (strain ATCC 33323 / DSM 20243 / BCRC 14619 / CIP 102991 / JCM 1131 / KCTC 3163 / NCIMB 11718 / NCTC 13722 / AM63).